Consider the following 251-residue polypeptide: 3-deoxy-manno-octulosonate cytidylyltransferase (251 aa).

The protein belongs to the KdsB family.

The protein resides in the cytoplasm. It carries out the reaction 3-deoxy-alpha-D-manno-oct-2-ulosonate + CTP = CMP-3-deoxy-beta-D-manno-octulosonate + diphosphate. It functions in the pathway nucleotide-sugar biosynthesis; CMP-3-deoxy-D-manno-octulosonate biosynthesis; CMP-3-deoxy-D-manno-octulosonate from 3-deoxy-D-manno-octulosonate and CTP: step 1/1. Its pathway is bacterial outer membrane biogenesis; lipopolysaccharide biosynthesis. In terms of biological role, activates KDO (a required 8-carbon sugar) for incorporation into bacterial lipopolysaccharide in Gram-negative bacteria. In Rhizobium etli (strain ATCC 51251 / DSM 11541 / JCM 21823 / NBRC 15573 / CFN 42), this protein is 3-deoxy-manno-octulosonate cytidylyltransferase.